Consider the following 271-residue polypeptide: (21S)-21-acetoxyl-apo-melianone synthase SDR (271 aa).

Residue Ser-150 is the Proton donor of the active site. Tyr-163 serves as the catalytic Proton acceptor. Lys-167 serves as the catalytic Proton donor/acceptor.

This sequence belongs to the short-chain dehydrogenases/reductases (SDR) family. In terms of tissue distribution, mainly expressed in petioles.

The enzyme catalyses 21-O-acetyl-isomeliandiol + A = (21S)-21-acetoxyl-apo-melianone + AH2. It functions in the pathway secondary metabolite biosynthesis; terpenoid biosynthesis. In terms of biological role, oxidoreductase involved in the biosynthesis of limonoids triterpene natural products such as azadirachtin, an antifeedant widely used as bioinsecticide, and possessing many medicinal applications including anti-tumoral, anti-malarial, anti-rheumatic, antibacterial, anti-inflammatory, anti-pyretic and diuretic effects. Catalyzes the oxidation of 21-O-acetyl-isomeliandiol to (21S)-21-acetoxyl-apo-melianone. This Melia azedarach (Chinaberry tree) protein is (21S)-21-acetoxyl-apo-melianone synthase SDR.